The following is a 343-amino-acid chain: Probable beta-1,3-galactosyltransferase 13 (343 aa).

Residues 22 to 42 (LIVFTSLAIGLTGFLFGLSTI) traverse the membrane as a helical; Signal-anchor for type II membrane protein segment. Asparagine 265 is a glycosylation site (N-linked (GlcNAc...) asparagine).

It belongs to the glycosyltransferase 31 family. It depends on Mn(2+) as a cofactor.

Its subcellular location is the golgi apparatus membrane. It functions in the pathway protein modification; protein glycosylation. Its function is as follows. Beta-1,3-galactosyltransferase that transfers galactose from UDP-galactose to substrates with a terminal glycosyl residue. This Arabidopsis thaliana (Mouse-ear cress) protein is Probable beta-1,3-galactosyltransferase 13 (B3GALT13).